We begin with the raw amino-acid sequence, 115 residues long: Large ribosomal subunit protein bL19 (115 aa).

This sequence belongs to the bacterial ribosomal protein bL19 family.

This protein is located at the 30S-50S ribosomal subunit interface and may play a role in the structure and function of the aminoacyl-tRNA binding site. The sequence is that of Large ribosomal subunit protein bL19 from Lachnospira eligens (strain ATCC 27750 / DSM 3376 / VPI C15-48 / C15-B4) (Eubacterium eligens).